Here is a 123-residue protein sequence, read N- to C-terminus: Small ribosomal subunit protein uS12 (123 aa).

The tract at residues 1-32 (MPTIQQLVRKGRTDKISKNKTPALKGSPQRRG) is disordered. Residue aspartate 89 is modified to 3-methylthioaspartic acid. The segment at 103 to 123 (DTQGVKGRKQARSRYGAKKEK) is disordered. Basic residues predominate over residues 108-123 (KGRKQARSRYGAKKEK).

This sequence belongs to the universal ribosomal protein uS12 family. In terms of assembly, part of the 30S ribosomal subunit. Contacts proteins S8 and S17. May interact with IF1 in the 30S initiation complex.

With S4 and S5 plays an important role in translational accuracy. Its function is as follows. Interacts with and stabilizes bases of the 16S rRNA that are involved in tRNA selection in the A site and with the mRNA backbone. Located at the interface of the 30S and 50S subunits, it traverses the body of the 30S subunit contacting proteins on the other side and probably holding the rRNA structure together. The combined cluster of proteins S8, S12 and S17 appears to hold together the shoulder and platform of the 30S subunit. The protein is Small ribosomal subunit protein uS12 of Cutibacterium acnes (strain DSM 16379 / KPA171202) (Propionibacterium acnes).